Here is a 462-residue protein sequence, read N- to C-terminus: Chromosomal replication initiator protein DnaA (462 aa).

Residues 1-86 (MSLSLWQQCL…EVGNKPVSQN (86 aa)) are domain I, interacts with DnaA modulators. The segment at 86–125 (NDSPPQRVVTHTPVAPAPQNTSVRPSWDNTAVQPELSYRS) is domain II. Residues 126–342 (NVNPKHTFDN…GALNRVIANA (217 aa)) form a domain III, AAA+ region region. The ATP site is built by glycine 170, glycine 172, lysine 173, and threonine 174. The segment at 343–462 (NFTGRAITID…FSNLIRTLSS (120 aa)) is domain IV, binds dsDNA.

It belongs to the DnaA family. In terms of assembly, oligomerizes as a right-handed, spiral filament on DNA at oriC.

The protein resides in the cytoplasm. Functionally, plays an essential role in the initiation and regulation of chromosomal replication. ATP-DnaA binds to the origin of replication (oriC) to initiate formation of the DNA replication initiation complex once per cell cycle. Binds the DnaA box (a 9 base pair repeat at the origin) and separates the double-stranded (ds)DNA. Forms a right-handed helical filament on oriC DNA; dsDNA binds to the exterior of the filament while single-stranded (ss)DNA is stabiized in the filament's interior. The ATP-DnaA-oriC complex binds and stabilizes one strand of the AT-rich DNA unwinding element (DUE), permitting loading of DNA polymerase. After initiation quickly degrades to an ADP-DnaA complex that is not apt for DNA replication. Binds acidic phospholipids. This chain is Chromosomal replication initiator protein DnaA, found in Photorhabdus laumondii subsp. laumondii (strain DSM 15139 / CIP 105565 / TT01) (Photorhabdus luminescens subsp. laumondii).